A 330-amino-acid polypeptide reads, in one-letter code: Malate dehydrogenase (330 aa).

Gly-12 to Gly-18 lines the NAD(+) pocket. Residues Arg-93 and Arg-99 each contribute to the substrate site. Residues Asn-106, Gln-113, and Val-130 to Asn-132 contribute to the NAD(+) site. Positions 132 and 166 each coordinate substrate. His-191 functions as the Proton acceptor in the catalytic mechanism.

This sequence belongs to the LDH/MDH superfamily. MDH type 2 family.

The enzyme catalyses (S)-malate + NAD(+) = oxaloacetate + NADH + H(+). In terms of biological role, catalyzes the reversible oxidation of malate to oxaloacetate. In Azoarcus sp. (strain BH72), this protein is Malate dehydrogenase.